The chain runs to 561 residues: Dihydroxy-acid dehydratase (561 aa).

Asp80 is a binding site for Mg(2+). Position 121 (Cys121) interacts with [2Fe-2S] cluster. Asp122 and Lys123 together coordinate Mg(2+). At Lys123 the chain carries N6-carboxylysine. Cys194 contacts [2Fe-2S] cluster. Residue Glu448 participates in Mg(2+) binding. The active-site Proton acceptor is the Ser474.

This sequence belongs to the IlvD/Edd family. As to quaternary structure, homodimer. [2Fe-2S] cluster serves as cofactor. Mg(2+) is required as a cofactor.

It carries out the reaction (2R)-2,3-dihydroxy-3-methylbutanoate = 3-methyl-2-oxobutanoate + H2O. It catalyses the reaction (2R,3R)-2,3-dihydroxy-3-methylpentanoate = (S)-3-methyl-2-oxopentanoate + H2O. The protein operates within amino-acid biosynthesis; L-isoleucine biosynthesis; L-isoleucine from 2-oxobutanoate: step 3/4. Its pathway is amino-acid biosynthesis; L-valine biosynthesis; L-valine from pyruvate: step 3/4. Functions in the biosynthesis of branched-chain amino acids. Catalyzes the dehydration of (2R,3R)-2,3-dihydroxy-3-methylpentanoate (2,3-dihydroxy-3-methylvalerate) into 2-oxo-3-methylpentanoate (2-oxo-3-methylvalerate) and of (2R)-2,3-dihydroxy-3-methylbutanoate (2,3-dihydroxyisovalerate) into 2-oxo-3-methylbutanoate (2-oxoisovalerate), the penultimate precursor to L-isoleucine and L-valine, respectively. This chain is Dihydroxy-acid dehydratase, found in Anaeromyxobacter sp. (strain Fw109-5).